A 613-amino-acid polypeptide reads, in one-letter code: Protein ECM3 (613 aa).

The next 4 helical transmembrane spans lie at 10 to 30 (IWAS…GFGL), 74 to 94 (GIIC…AFIV), 106 to 126 (GGIL…AYLQ), and 143 to 163 (VANV…LGGF). A disordered region spans residues 177–256 (DEENTLTNDD…PAIDDRSSNS (80 aa)). Composition is skewed to polar residues over residues 187 to 206 (SAQQ…SNQD) and 213 to 226 (ESTV…SYIS). Residues Ser-291 and Ser-338 each carry the phosphoserine modification. A disordered region spans residues 345-366 (RRRKSSISSQGAPSVLQADGTI). Helical transmembrane passes span 432-452 (MAVI…LFVT), 471-491 (FIMD…LILL), 546-566 (MLLF…LIYF), and 587-607 (FLML…SYFI).

The protein resides in the endoplasmic reticulum membrane. May be involved in cell wall organization and biogenesis. The sequence is that of Protein ECM3 (ECM3) from Saccharomyces cerevisiae (strain ATCC 204508 / S288c) (Baker's yeast).